Reading from the N-terminus, the 372-residue chain is tRNA-specific 2-thiouridylase MnmA (372 aa).

Residues 7–14 (GLSGGVDS) and Met33 each bind ATP. Residues 104-106 (NPD) form an interaction with target base in tRNA region. Cys109 acts as the Nucleophile in catalysis. A disulfide bridge links Cys109 with Cys202. Gly134 contributes to the ATP binding site. Residues 152–154 (KDQ) form an interaction with tRNA region. Catalysis depends on Cys202, which acts as the Cysteine persulfide intermediate. Positions 310–311 (RY) are interaction with tRNA.

This sequence belongs to the MnmA/TRMU family.

It localises to the cytoplasm. The catalysed reaction is S-sulfanyl-L-cysteinyl-[protein] + uridine(34) in tRNA + AH2 + ATP = 2-thiouridine(34) in tRNA + L-cysteinyl-[protein] + A + AMP + diphosphate + H(+). Functionally, catalyzes the 2-thiolation of uridine at the wobble position (U34) of tRNA, leading to the formation of s(2)U34. The protein is tRNA-specific 2-thiouridylase MnmA of Mesomycoplasma hyopneumoniae (strain 7448) (Mycoplasma hyopneumoniae).